A 319-amino-acid polypeptide reads, in one-letter code: Acetyl-coenzyme A carboxylase carboxyl transferase subunit alpha (319 aa).

In terms of domain architecture, CoA carboxyltransferase C-terminal spans 35–296 (DLDKEIEQLE…KATLLRQLAE (262 aa)).

The protein belongs to the AccA family. As to quaternary structure, acetyl-CoA carboxylase is a heterohexamer composed of biotin carboxyl carrier protein (AccB), biotin carboxylase (AccC) and two subunits each of ACCase subunit alpha (AccA) and ACCase subunit beta (AccD).

Its subcellular location is the cytoplasm. It catalyses the reaction N(6)-carboxybiotinyl-L-lysyl-[protein] + acetyl-CoA = N(6)-biotinyl-L-lysyl-[protein] + malonyl-CoA. It participates in lipid metabolism; malonyl-CoA biosynthesis; malonyl-CoA from acetyl-CoA: step 1/1. Functionally, component of the acetyl coenzyme A carboxylase (ACC) complex. First, biotin carboxylase catalyzes the carboxylation of biotin on its carrier protein (BCCP) and then the CO(2) group is transferred by the carboxyltransferase to acetyl-CoA to form malonyl-CoA. This Vibrio vulnificus (strain CMCP6) protein is Acetyl-coenzyme A carboxylase carboxyl transferase subunit alpha.